The following is a 200-amino-acid chain: Small ribosomal subunit protein eS1 (200 aa).

Belongs to the eukaryotic ribosomal protein eS1 family.

The sequence is that of Small ribosomal subunit protein eS1 from Thermococcus onnurineus (strain NA1).